The primary structure comprises 249 residues: Type III pantothenate kinase (249 aa).

6–13 (DCGNSFIK) contacts ATP. Substrate contacts are provided by residues tyrosine 93 and 100-103 (GLDR). Aspartate 102 functions as the Proton acceptor in the catalytic mechanism. Residue aspartate 122 participates in K(+) binding. Residue threonine 125 participates in ATP binding. Threonine 181 contributes to the substrate binding site.

Belongs to the type III pantothenate kinase family. In terms of assembly, homodimer. NH4(+) serves as cofactor. It depends on K(+) as a cofactor.

Its subcellular location is the cytoplasm. It carries out the reaction (R)-pantothenate + ATP = (R)-4'-phosphopantothenate + ADP + H(+). It functions in the pathway cofactor biosynthesis; coenzyme A biosynthesis; CoA from (R)-pantothenate: step 1/5. In terms of biological role, catalyzes the phosphorylation of pantothenate (Pan), the first step in CoA biosynthesis. The polypeptide is Type III pantothenate kinase (Pseudomonas fluorescens (strain SBW25)).